Consider the following 164-residue polypeptide: Ecotin (164 aa).

A signal peptide spans Met1 to Ala20. A disulfide bridge connects residues Cys72 and Cys109.

The protein belongs to the protease inhibitor I11 (ecotin) family. As to quaternary structure, homodimer.

Its subcellular location is the periplasm. General inhibitor of pancreatic serine proteases: inhibits chymotrypsin, trypsin, elastases, factor X, kallikrein as well as a variety of other proteases. This Salmonella enteritidis PT4 (strain P125109) protein is Ecotin.